An 85-amino-acid chain; its full sequence is Toxin BmKT (85 aa).

Residues 1–19 (MNYLVFFSLALLLMTGVES) form the signal peptide. In terms of domain architecture, LCN-type CS-alpha/beta spans 21–83 (RDGYIADDKN…VPIRVPGKCN (63 aa)). Intrachain disulfides connect cysteine 31–cysteine 82, cysteine 35–cysteine 55, cysteine 41–cysteine 65, and cysteine 45–cysteine 67.

It belongs to the long (4 C-C) scorpion toxin superfamily. Sodium channel inhibitor family. Alpha subfamily. Expressed by the venom gland.

The protein resides in the secreted. Its function is as follows. Binds to sodium channels (Nav) and inhibits the inactivation of the activated channels, thereby blocking neuronal transmission. Tested on mice, has antitumor effect and strong inhibitory effect on pain. In Olivierus martensii (Manchurian scorpion), this protein is Toxin BmKT.